Here is a 336-residue protein sequence, read N- to C-terminus: Fructose-1,6-bisphosphatase class 1 (336 aa).

Residues Glu92, Asp115, Leu117, and Asp118 each coordinate Mg(2+). Substrate is bound by residues 118–121 (DGSS), Asn211, Tyr244, 262–264 (YLY), and Lys274. A Mg(2+)-binding site is contributed by Glu280.

The protein belongs to the FBPase class 1 family. Homotetramer. It depends on Mg(2+) as a cofactor.

It localises to the cytoplasm. It catalyses the reaction beta-D-fructose 1,6-bisphosphate + H2O = beta-D-fructose 6-phosphate + phosphate. The protein operates within carbohydrate biosynthesis; gluconeogenesis. This is Fructose-1,6-bisphosphatase class 1 from Aliivibrio fischeri (strain MJ11) (Vibrio fischeri).